Consider the following 261-residue polypeptide: tRNA pseudouridine synthase A (261 aa).

Residue D51 is the Nucleophile of the active site. Y109 is a substrate binding site.

It belongs to the tRNA pseudouridine synthase TruA family. As to quaternary structure, homodimer.

The catalysed reaction is uridine(38/39/40) in tRNA = pseudouridine(38/39/40) in tRNA. In terms of biological role, formation of pseudouridine at positions 38, 39 and 40 in the anticodon stem and loop of transfer RNAs. This is tRNA pseudouridine synthase A from Shewanella baltica (strain OS155 / ATCC BAA-1091).